A 647-amino-acid polypeptide reads, in one-letter code: Macrolide export ATP-binding/permease protein MacB (647 aa).

In terms of domain architecture, ABC transporter spans 5–243; it reads LELKGIERSY…TQTPSLTSKI (239 aa). Residue 41-48 coordinates ATP; that stretch reads GASGSGKS. 4 helical membrane passes run 272-292, 522-542, 576-596, and 610-630; these read LLTM…LVIG, LFLT…VMNI, ILVC…IAFI, and PIAL…FGFL.

It belongs to the ABC transporter superfamily. Macrolide exporter (TC 3.A.1.122) family. Homodimer. Part of the tripartite efflux system MacAB-TolC, which is composed of an inner membrane transporter, MacB, a periplasmic membrane fusion protein, MacA, and an outer membrane component, TolC. The complex forms a large protein conduit and can translocate molecules across both the inner and outer membranes. Interacts with MacA.

Its subcellular location is the cell inner membrane. Functionally, part of the tripartite efflux system MacAB-TolC. MacB is a non-canonical ABC transporter that contains transmembrane domains (TMD), which form a pore in the inner membrane, and an ATP-binding domain (NBD), which is responsible for energy generation. Confers resistance against macrolides. In Photorhabdus laumondii subsp. laumondii (strain DSM 15139 / CIP 105565 / TT01) (Photorhabdus luminescens subsp. laumondii), this protein is Macrolide export ATP-binding/permease protein MacB.